A 115-amino-acid chain; its full sequence is Large ribosomal subunit protein bL19 (115 aa).

The protein belongs to the bacterial ribosomal protein bL19 family.

Its function is as follows. This protein is located at the 30S-50S ribosomal subunit interface and may play a role in the structure and function of the aminoacyl-tRNA binding site. The protein is Large ribosomal subunit protein bL19 of Streptococcus pneumoniae serotype 2 (strain D39 / NCTC 7466).